Here is a 38-residue protein sequence, read N- to C-terminus: Large ribosomal subunit protein bL36 (38 aa).

Belongs to the bacterial ribosomal protein bL36 family.

The sequence is that of Large ribosomal subunit protein bL36 from Saccharophagus degradans (strain 2-40 / ATCC 43961 / DSM 17024).